A 48-amino-acid chain; its full sequence is Piguamerin (48 aa).

Intrachain disulfides connect Cys3/Cys14, Cys8/Cys19, Cys21/Cys41, Cys26/Cys45, and Cys30/Cys47. The Antistasin-like domain maps to Cys19–Cys47.

Belongs to the protease inhibitor I15 (antistasin) family.

It is found in the secreted. Inhibits plasma and tissue kallikrein, and trypsin. May be involved in leech hematophagia. This Hirudo nipponia (Korean blood-sucking leech) protein is Piguamerin.